The chain runs to 1427 residues: MKMFQSFFSNYIDINFFRNATLDQCLLLFYLSLFSLTNLFLIQKLFHANHTQHPLKKYFGETCLLEYIQIILSIVSAALSFYLDTNAVWWAIRTITHLEIVGLNILSSLKYGSTLFSWISVANAFGLLLLRLISIYDFLTYSSWSFSVKGGSFLLLLPLAYNITLFLLVIIPLFFPRAWSPTVKFSKVARPSPEQTCSIFSLIFTYGWLNGIIWKSWKKPITLTDVPALPDTECTQIWYSRFAKNDRKSLMHTILLSLKSTILLMVFLSVLVSSTLFVTPLAIKKLLQYLQNPKSDEGNSPFLWVFVLLIGPYLASVVKELYVHVSRRFMLRIKAAITQMIYKKVLTSKTLFVAVDGSKINLDYVYNLLAKDVDNIGEMREFIGIIARAPLEMGVSMYFLYQLLGWSAYVGLLLAILSSSFPLLVASKISRLTSIANTSSDERIRLTTELLKSIKITKLFGWERPMLSRIQEKRSFEVNNMYSLTLFDIIFKSGMKIAPFISMFITFAIYTKIMGHQLTPATAFTSISMFGLLRYQFIWLASVSRQFIQFKVSLKRVDNFVYGNMVNDSSIESSDSFVFENTSLSWSPTPSTALFQLKNLNFTIPRNQFTLVVGSTGSGKSTLAMALLGELHVISGKMTTPSISQRIAYVPQAAWLRNGTIRSNILFGEPYDEERYFQIIKACCLDSDLNSMNDGDLTYIHSNGSSLSGGQKQRVSLARALYSNAEVYIFDDIFSALDVSTSRKIYESCFLSTLLQHKTIILFTHNVSLCLPIAENVIVLKNSTAQLVSPDSIQELVPSTFFSSNTKKDNIEEENLEPHSFSFDSTLASSSDNDEQRDFASNSSIVLLGLHYLKYFGSNKYILGSILLVMMSQVSLASIHFWIALWSGNSLFSLKLPSSFSFLWGYAILLFIYFLMDLSRAITFAKGGRTASENIHDILSERVLYSPLHWFEKTAAGRILNRFSKDMYATDNLLWASLEGMLLCVMAILITMLNVTLVMPIFMVPAAFVSLLVYLHGYAYSKAQKQLTSLQSSRTSPVFTMLGETLGGITVIRAFKKEKIFEHENMAFIDDMIQPLYISFAINRWLAIRTDGISGLVGFSTGLIALLRQNIPPGLVGFSLNSAIGFNISVLVFVRANNEILTYINNFRRLYEYMLLPSEKNESSCLTKPMNKEWPTLGHVSIKNLTVSYSIGQAAVLEDINLEILPKEKIAIVGRTGSGKSTMGLTLLRFTMIMSGAVEVDGIDINSLDLEVLRQRISLIPQDPVLISGTVRSNLDPFEEYGDGELNEILKTASCESLVQASNKNSLDAFAIHLDTPVDSGGVNFSSGQRQILALARALVRKSRIVILDESTASVDDTTDRRIQQMLRAAFKHATVLCIAHRIKTIVDYDKVLVLDSGKTVEFGSPKSLYTQRRAFWKMCKESHISL.

A helical membrane pass occupies residues 26 to 46 (LLLFYLSLFSLTNLFLIQKLF). Asparagine 49 carries an N-linked (GlcNAc...) asparagine glycan. 9 helical membrane-spanning segments follow: residues 63-83 (CLLE…SFYL), 87-107 (AVWW…NILS), 115-135 (LFSW…LISI), 155-175 (LLLP…PLFF), 197-217 (CSIF…WKSW), 262-282 (ILLM…TPLA), 298-318 (GNSP…ASVV), 345-367 (VLTS…YVYN), and 397-417 (MYFL…LAIL). The 288-residue stretch at 262–549 (ILLMVFLSVL…LASVSRQFIQ (288 aa)) folds into the ABC transmembrane type-1 1 domain. An N-linked (GlcNAc...) asparagine glycan is attached at asparagine 437. Helical transmembrane passes span 489 to 509 (IIFK…TFAI) and 513 to 533 (IMGH…FGLL). 3 N-linked (GlcNAc...) asparagine glycosylation sites follow: asparagine 567, asparagine 581, and asparagine 601. Residues 579–807 (FENTSLSWSP…PSTFFSSNTK (229 aa)) form the ABC transporter 1 domain. A helical membrane pass occupies residues 609 to 629 (FTLVVGSTGSGKSTLAMALLG). Residue 614 to 621 (GSTGSGKS) coordinates ATP. 2 N-linked (GlcNAc...) asparagine glycosylation sites follow: asparagine 658 and asparagine 703. A helical membrane pass occupies residues 760–780 (IILFTHNVSLCLPIAENVIVL). N-linked (GlcNAc...) asparagine glycans are attached at residues asparagine 782 and asparagine 842. The 281-residue stretch at 862–1142 (ILGSILLVMM…FVRANNEILT (281 aa)) folds into the ABC transmembrane type-1 2 domain. 3 helical membrane passes run 866-886 (ILLV…IALW), 896-916 (LPSS…YFLM), and 973-993 (LLWA…ITML). N-linked (GlcNAc...) asparagine glycosylation occurs at asparagine 994. Helical transmembrane passes span 995–1015 (VTLV…LVYL), 1086–1106 (LAIR…LIAL), and 1114–1134 (GLVG…LVFV). N-linked (GlcNAc...) asparagine glycans are attached at residues asparagine 1161 and asparagine 1184. The region spanning 1180–1422 (VSIKNLTVSY…RRAFWKMCKE (243 aa)) is the ABC transporter 2 domain. 1214-1221 (GRTGSGKS) provides a ligand contact to ATP. A helical membrane pass occupies residues 1223–1243 (MGLTLLRFTMIMSGAVEVDGI). A glycan (N-linked (GlcNAc...) asparagine) is linked at asparagine 1324.

Belongs to the ABC transporter superfamily. ABCC family. Conjugate transporter (TC 3.A.1.208) subfamily.

It localises to the membrane. The chain is ATP-binding cassette transporter abc1 (abc1) from Schizosaccharomyces pombe (strain 972 / ATCC 24843) (Fission yeast).